A 208-amino-acid polypeptide reads, in one-letter code: Uracil phosphoribosyltransferase (208 aa).

5-phospho-alpha-D-ribose 1-diphosphate contacts are provided by residues Arg-78, Arg-103, and 130–138 (DPMLATGGT). Residues Ile-193 and 198 to 200 (GDA) each bind uracil. Asp-199 serves as a coordination point for 5-phospho-alpha-D-ribose 1-diphosphate.

Belongs to the UPRTase family. The cofactor is Mg(2+).

The catalysed reaction is UMP + diphosphate = 5-phospho-alpha-D-ribose 1-diphosphate + uracil. The protein operates within pyrimidine metabolism; UMP biosynthesis via salvage pathway; UMP from uracil: step 1/1. With respect to regulation, allosterically activated by GTP. Functionally, catalyzes the conversion of uracil and 5-phospho-alpha-D-ribose 1-diphosphate (PRPP) to UMP and diphosphate. In Nitratidesulfovibrio vulgaris (strain DSM 19637 / Miyazaki F) (Desulfovibrio vulgaris), this protein is Uracil phosphoribosyltransferase.